The following is a 271-amino-acid chain: NADPH-dependent 7-cyano-7-deazaguanine reductase (271 aa).

81–83 (IES) lines the substrate pocket. Residue 83 to 84 (SK) coordinates NADPH. The Thioimide intermediate role is filled by cysteine 177. Aspartate 184 serves as the catalytic Proton donor. 216–217 (HE) lines the substrate pocket. 245–246 (RG) contributes to the NADPH binding site.

Belongs to the GTP cyclohydrolase I family. QueF type 2 subfamily. In terms of assembly, homodimer.

The protein localises to the cytoplasm. The catalysed reaction is 7-aminomethyl-7-carbaguanine + 2 NADP(+) = 7-cyano-7-deazaguanine + 2 NADPH + 3 H(+). It participates in tRNA modification; tRNA-queuosine biosynthesis. In terms of biological role, catalyzes the NADPH-dependent reduction of 7-cyano-7-deazaguanine (preQ0) to 7-aminomethyl-7-deazaguanine (preQ1). This chain is NADPH-dependent 7-cyano-7-deazaguanine reductase, found in Xanthomonas campestris pv. campestris (strain B100).